The primary structure comprises 219 residues: Transcription factor MYB23 (219 aa).

2 consecutive HTH myb-type domains span residues 9-61 (EHEY…MNYL) and 62-116 (SPNV…SKKL). 2 DNA-binding regions (H-T-H motif) span residues 37–61 (WNRIAKKTGLKRCGKSCRLRWMNYL) and 89–112 (WSLIAKRVPGRTDNQVKNYWNTHL).

In terms of assembly, interacts with BHLH2/EGL3/MYC146, BHLH12/MYC1 and GL3. As to expression, expressed in roots, seed coats, leaves, stems and flowers. Detected specifically in trichomes, and in the cell division and differentiation zone of the root.

It localises to the nucleus. In terms of biological role, transcription activator, when associated with BHLH2/EGL3/MYC146 or BHLH12/MYC1. Regulates the epidermal cell fate specification. Mediates the formation of columellae and accumulation of mucilages on seed coats. Controls the elongation of epidermal cells positively in roots but negatively in stems, leading to the promotion of primary roots elongation and repression of leaves and stems elongation, respectively. Ovoids ectopic root-hair formation, probably by inducing GL2 in roots. Controls trichome initiation and branching. This is Transcription factor MYB23 (MYB23) from Arabidopsis thaliana (Mouse-ear cress).